The chain runs to 430 residues: 3-phosphoshikimate 1-carboxyvinyltransferase (430 aa).

3 residues coordinate 3-phosphoshikimate: Lys33, Ser34, and Arg38. Position 33 (Lys33) interacts with phosphoenolpyruvate. 2 residues coordinate phosphoenolpyruvate: Gly101 and Arg129. Positions 172, 173, 174, 201, 319, and 346 each coordinate 3-phosphoshikimate. Residue Gln174 participates in phosphoenolpyruvate binding. Glu319 functions as the Proton acceptor in the catalytic mechanism. Phosphoenolpyruvate contacts are provided by Arg350, Arg391, and Lys416.

This sequence belongs to the EPSP synthase family. As to quaternary structure, monomer.

The protein resides in the cytoplasm. It catalyses the reaction 3-phosphoshikimate + phosphoenolpyruvate = 5-O-(1-carboxyvinyl)-3-phosphoshikimate + phosphate. It functions in the pathway metabolic intermediate biosynthesis; chorismate biosynthesis; chorismate from D-erythrose 4-phosphate and phosphoenolpyruvate: step 6/7. Catalyzes the transfer of the enolpyruvyl moiety of phosphoenolpyruvate (PEP) to the 5-hydroxyl of shikimate-3-phosphate (S3P) to produce enolpyruvyl shikimate-3-phosphate and inorganic phosphate. In Corynebacterium glutamicum (strain ATCC 13032 / DSM 20300 / JCM 1318 / BCRC 11384 / CCUG 27702 / LMG 3730 / NBRC 12168 / NCIMB 10025 / NRRL B-2784 / 534), this protein is 3-phosphoshikimate 1-carboxyvinyltransferase.